The primary structure comprises 1203 residues: MSKVIKPPGQARTADFRTLERESRFINPPKDKSAFPLLQEAVQPHIGSFNALTEGPDGGLLNLGVKDIGEKVIFDGKPLNSEDEISNSGYLGNKLSVSVEQVSIAKPMSNDGVSSAVERKVYPSESRQRLTSYRGKLLLKLKWSVNNGEENLFEVRDCGGLPVMLQSNRCHLNKMSPYELVQHKEESDEIGGYFIVNGIEKLIRMLIVQRRNHPMAIIRPSFANRGASYSHYGIQIRSVRPDQTSQTNVLHYLNDGQVTFRFSWRKNEYLVPVVMILKALCHTSDREIFDGIIGNDVKDSFLTDRLELLLRGFKKRYPHLQNRTQVLQYLGDKFRVVFQASPDQSDLEVGQEVLDRIVLVHLGKDGSQDKFRMLLFMIRKLYSLVAGECSPDNPDATQHQEVLLGGFLYGMILKEKIDEYLQNIIAQVRMDINRGMAINFKDKRYMSRVLMRVNENIGSKMQYFLSTGNLVSQSGLDLQQVSGYTVVAEKINFYRFISHFRMVHRGSFFAQLKTTTVRKLLPESWGFLCPVHTPDGSPCGLLNHFAHKCRISTQQSDVSRIPSILYSLGVAPASHTFAAGPSLCCVQIDGKIIGWVSHEQGKIIADTLRYWKVEGKTPGLPIDLEIGYVPPSTRGQYPGLYLFGGHSRMLRPVRYLPLDKEDIVGPFEQVYMNIAVTPQEIQNNVHTHVEFTPTNILSILANLTPFSDFNQSPRNMYQCQMGKQTMGTPGVALCHRSDNKLYRLQTGQTPIVKANLYDDYGMDNFPNGFNAVVAVISYTGYDMDDAMIINKSADERGFGYGTMYKTEKVDLALNRNRGDPITQHFGFGNDEWPKEWLEKLDEDGLPYIGTYVEEGDPICAYFDDTLNKTKIKTYHSSEPAYIEEVNLIGDESNKFQELQTVSIKYRIRRTPQIGDKFSSRHGQKGVCSRKWPTIDMPFSETGIQPDIIINPHAFPSRMTIGMFVESLAGKAGALHGIAQDSTPWIFNEDDTPADYFGEQLAKAGYNYHGNEPMYSGATGEELRADIYVGVVYYQRLRHMVNDKFQVRSTGPVNSLTMQPVKGRKRHGGIRVGEMERDALIGHGTSFLLQDRLLNSSDYTQASVCRECGSILTTQQSVPRIGSISTVCCRRCSMRFEDAKKLLTKSEDGEKIFIDDSQIWEDGQGNKFVGGNETTTVAIPFVLKYLDSELSAMGIRLRYNVEPK.

An N-acetylserine modification is found at Ser2. A Phosphoserine modification is found at Ser81. Residues 1104 to 1131 form a C4-type zinc finger; that stretch reads CRECGSILTTQQSVPRIGSISTVCCRRC. A Phosphoserine modification is found at Ser1156.

Belongs to the RNA polymerase beta chain family. In terms of assembly, component of the RNA polymerase I (Pol I) complex consisting of 14 subunits: RPA135, RPA190, RPC40, RPA14, RPB5, RPO26, RPA43, RPB8, RPA12, RPB10, RPC19, RPC10, RPA49 and RPA34. The complex is composed of a horseshoe-shaped core containing ten subunits (RPA135, RPA190, RPB5, RPO26, RPB8, RPB10, RPC10, RPA12, RPC19 and RPC40) where RPA135 and RPA190 form the DNA-binding cleft. Outside of the core, RPA14 and RPA43 form the stalk that mediates interactions with transcription initiation factors and newly synthesized RNA.

It is found in the nucleus. The protein localises to the nucleolus. The catalysed reaction is RNA(n) + a ribonucleoside 5'-triphosphate = RNA(n+1) + diphosphate. Functionally, DNA-dependent RNA polymerases catalyze the transcription of DNA into RNA using the four ribonucleoside triphosphates as substrates. Component of RNA polymerase I (Pol I) which synthesizes ribosomal RNA precursors. Besides, RNA polymerase I has intrinsic RNA cleavage activity. RPA190 and RPA135 both contribute to the polymerase catalytic activity and together form the Pol I active center. In addition, subunit RPA12 contributes a catalytic zinc ribbon that is required for RNA cleavage by Pol I. A single stranded DNA template strand of the promoter is positioned within the central active site cleft of Pol I. A bridging helix emanates from RPA190 and crosses the cleft near the catalytic site and is thought to promote translocation of Pol I by acting as a ratchet that moves the RNA-DNA hybrid through the active site by switching from straight to bent conformations at each step of nucleotide addition. The polypeptide is DNA-directed RNA polymerase I subunit RPA135 (RPA135) (Saccharomyces cerevisiae (strain ATCC 204508 / S288c) (Baker's yeast)).